Here is a 443-residue protein sequence, read N- to C-terminus: UDP-N-acetylmuramate--L-alanine ligase (443 aa).

110-116 (GAHGKTS) provides a ligand contact to ATP.

It belongs to the MurCDEF family.

It localises to the cytoplasm. The catalysed reaction is UDP-N-acetyl-alpha-D-muramate + L-alanine + ATP = UDP-N-acetyl-alpha-D-muramoyl-L-alanine + ADP + phosphate + H(+). It functions in the pathway cell wall biogenesis; peptidoglycan biosynthesis. Cell wall formation. The polypeptide is UDP-N-acetylmuramate--L-alanine ligase (Lactococcus lactis subsp. cremoris (strain MG1363)).